A 293-amino-acid polypeptide reads, in one-letter code: MTDTTRSLRDCLAPAKLNLFLHITGRRPDGYHELQSVFQLLDWGDRLHFTLRDDGKVSRKTDVPGVPEETDLIVRAASLLKAHTGTAAGVDIEIDKRLPMGAGLGGGSSDAATTLLALNRLWKLDLPRATLQSLAVKLGADVPFFVFGKNAFAEGIGEALQAVELPTRWFLVVTPRVHVPTAAIFSEKSLTRDSKPITITDFLAQQDCNTGWPDSFGRNDMQPVVTSKYAEVAKVVGWFYNLTPARMTGSGASVFAAFKSKAEAGAAQAQLPAGWDSAVAESLGEHPLFAFAS.

K16 is a catalytic residue. 99 to 109 (PMGAGLGGGSS) lines the ATP pocket. D141 is an active-site residue.

Belongs to the GHMP kinase family. IspE subfamily.

The catalysed reaction is 4-CDP-2-C-methyl-D-erythritol + ATP = 4-CDP-2-C-methyl-D-erythritol 2-phosphate + ADP + H(+). It functions in the pathway isoprenoid biosynthesis; isopentenyl diphosphate biosynthesis via DXP pathway; isopentenyl diphosphate from 1-deoxy-D-xylulose 5-phosphate: step 3/6. Catalyzes the phosphorylation of the position 2 hydroxy group of 4-diphosphocytidyl-2C-methyl-D-erythritol. The protein is 4-diphosphocytidyl-2-C-methyl-D-erythritol kinase of Burkholderia thailandensis (strain ATCC 700388 / DSM 13276 / CCUG 48851 / CIP 106301 / E264).